We begin with the raw amino-acid sequence, 209 residues long: MKNLLKKSLLGLAFLSLNGFAFADAQAVAELQQRLDKAMQYSADFEQTVRSSKGKEIQKGQGKFQVKRPNLFRMDTQSPQENLIVSDGKTLWFYDPFVSQVTANWVKDAVSNTPFVLLTSNDKSHWDQYDVTQNVDNFVLKPKSKKSAIKQFDIRIDATGLVKGFSTIERDGQSNLYVLRNISTAHLSESLFSFSVPKGAELDDQRGKK.

Residues 1–23 form the signal peptide; the sequence is MKNLLKKSLLGLAFLSLNGFAFA.

It belongs to the LolA family. In terms of assembly, monomer.

The protein localises to the periplasm. Functionally, participates in the translocation of lipoproteins from the inner membrane to the outer membrane. Only forms a complex with a lipoprotein if the residue after the N-terminal Cys is not an aspartate (The Asp acts as a targeting signal to indicate that the lipoprotein should stay in the inner membrane). The polypeptide is Outer-membrane lipoprotein carrier protein (Glaesserella parasuis serovar 5 (strain SH0165) (Haemophilus parasuis)).